We begin with the raw amino-acid sequence, 224 residues long: 7-cyano-7-deazaguanine synthase (224 aa).

10 to 20 lines the ATP pocket; that stretch reads LSGGLDSATVV. 4 residues coordinate Zn(2+): Cys-189, Cys-199, Cys-202, and Cys-205.

It belongs to the QueC family. Zn(2+) is required as a cofactor.

The catalysed reaction is 7-carboxy-7-deazaguanine + NH4(+) + ATP = 7-cyano-7-deazaguanine + ADP + phosphate + H2O + H(+). Its pathway is purine metabolism; 7-cyano-7-deazaguanine biosynthesis. Its function is as follows. Catalyzes the ATP-dependent conversion of 7-carboxy-7-deazaguanine (CDG) to 7-cyano-7-deazaguanine (preQ(0)). The protein is 7-cyano-7-deazaguanine synthase of Stutzerimonas stutzeri (strain A1501) (Pseudomonas stutzeri).